The following is a 452-amino-acid chain: MAGQMSKFRRPEQLDLLPYIAKWLALAGLVALLAGSASALFLLSLDHATQWRETHPWVIWLLPVAGFAVGLAYHLIGKPVDAGNNLIIDEIHDPKKIVPLRMVPMVLIGTVVSHLFGASVGREGTAVQMGGALADQLTHVFRLRREDRRVILMAGISAGFASVFGTPLAGALFGLEVLAIGRMRYDALFPCVVAAIVADQVGQAWGVVHTHYVIGEVVPVQLWSVMAVVAAGIVFGLTGLLFATATHKLGAFVKRLITYSPLRPFAGGLLIAVAVWALGSNHYIDVDKYIGLGIPSIVQSFQMPMAPWDWLGKMVFTVVSLGTGFKGGEVTPLFYIGATLGNALAPLLHLPFGMLAGIGFVAVFAGAANTPLATIVMAMELFGPEIAPLAAIACIASYLVSGHTGIYHAQRVGHSKHHRPLPEEIRLSDIKQFHAQSESASERKVTLAGEEK.

A run of 10 helical transmembrane segments spans residues 23 to 43 (WLALAGLVALLAGSASALFLL), 57 to 77 (WVIWLLPVAGFAVGLAYHLIG), 97 to 117 (IVPLRMVPMVLIGTVVSHLFG), 160 to 180 (FASVFGTPLAGALFGLEVLAI), 188 to 208 (LFPCVVAAIVADQVGQAWGVV), 222 to 242 (LWSVMAVVAAGIVFGLTGLLF), 264 to 284 (PFAGGLLIAVAVWALGSNHYI), 315 to 337 (VFTVVSLGTGFKGGEVTPLFYIG), 344 to 364 (LAPLLHLPFGMLAGIGFVAVF), and 386 to 408 (IAPLAAIACIASYLVSGHTGIYH).

This sequence belongs to the chloride channel (TC 2.A.49) family.

The protein resides in the cell membrane. Functionally, transports chloride and fluoride with similar efficiency. The sequence is that of Chloride/fluoride channel protein (eriC) from Pseudomonas syringae pv. tomato (strain ATCC BAA-871 / DC3000).